The chain runs to 232 residues: Ribosome maturation protein SDO1 homolog (232 aa).

It belongs to the SDO1/SBDS family.

This chain is Ribosome maturation protein SDO1 homolog, found in Methanothermobacter thermautotrophicus (strain ATCC 29096 / DSM 1053 / JCM 10044 / NBRC 100330 / Delta H) (Methanobacterium thermoautotrophicum).